The sequence spans 214 residues: Probable nicotinate-nucleotide adenylyltransferase (214 aa).

It belongs to the NadD family.

The catalysed reaction is nicotinate beta-D-ribonucleotide + ATP + H(+) = deamido-NAD(+) + diphosphate. It functions in the pathway cofactor biosynthesis; NAD(+) biosynthesis; deamido-NAD(+) from nicotinate D-ribonucleotide: step 1/1. Its function is as follows. Catalyzes the reversible adenylation of nicotinate mononucleotide (NaMN) to nicotinic acid adenine dinucleotide (NaAD). In Pelodictyon phaeoclathratiforme (strain DSM 5477 / BU-1), this protein is Probable nicotinate-nucleotide adenylyltransferase.